Consider the following 396-residue polypeptide: 1-deoxy-D-xylulose 5-phosphate reductoisomerase (396 aa).

T13, G14, S15, I16, and N127 together coordinate NADPH. K128 contributes to the 1-deoxy-D-xylulose 5-phosphate binding site. An NADPH-binding site is contributed by E129. D153 contacts Mn(2+). 1-deoxy-D-xylulose 5-phosphate-binding residues include S154, E155, S184, and H207. E155 contacts Mn(2+). G213 is a binding site for NADPH. 4 residues coordinate 1-deoxy-D-xylulose 5-phosphate: S220, N225, K226, and E229. E229 provides a ligand contact to Mn(2+).

Belongs to the DXR family. Mg(2+) serves as cofactor. The cofactor is Mn(2+).

It catalyses the reaction 2-C-methyl-D-erythritol 4-phosphate + NADP(+) = 1-deoxy-D-xylulose 5-phosphate + NADPH + H(+). It participates in isoprenoid biosynthesis; isopentenyl diphosphate biosynthesis via DXP pathway; isopentenyl diphosphate from 1-deoxy-D-xylulose 5-phosphate: step 1/6. Functionally, catalyzes the NADPH-dependent rearrangement and reduction of 1-deoxy-D-xylulose-5-phosphate (DXP) to 2-C-methyl-D-erythritol 4-phosphate (MEP). This is 1-deoxy-D-xylulose 5-phosphate reductoisomerase from Pseudomonas fluorescens (strain ATCC BAA-477 / NRRL B-23932 / Pf-5).